A 388-amino-acid chain; its full sequence is MKRNFPKLIALSLIFSLSVTPIANAESNSNIKAKDKKHVQVNVEDKSVPTDVRNLAQKDYLSYVTSLDKIYNKEKASYTLGEPFKIYKFNKKSDGNYYFPVLNTEGNIDYIVTISPKITKYSSSSSKYTINVSPFLSKVLNQYKDQQITILTNSKGYYVVTQNHKAKLVLKTPRLEDKKLKKTESIPTGNNVTQLKQKASVTMPTSQFKSNNYTYNEQYINKLENFKIRETQGNNGWCAGYTMSELLNATYNTNKYHAEAVMRFLHPNLQGQRFQFTGLTPREMIYFGQTQGRSPQLLNRMTTYNEVDNLTKNNKGIAVLGSRVESRNGMHAGHAMAVVGNAKLDNGQEVIIIWNSWDNGFMTQDAKNNVIPVSNGDHYRWYSSIYGY.

The signal sequence occupies residues 1–25; it reads MKRNFPKLIALSLIFSLSVTPIANA. Positions 26 to 214 are excised as a propeptide; that stretch reads ESNSNIKAKD…TSQFKSNNYT (189 aa). Catalysis depends on residues cysteine 238, histidine 334, and asparagine 355.

This sequence belongs to the peptidase C47 family. In terms of assembly, in the cytoplasm, prematurely activated/folded ScpA forms a stable non-covalent complex with ScpB. Cleavage leads to the activation of ScpA probably by an auto-catalytic manner.

It localises to the secreted. The catalysed reaction is Broad endopeptidase action on proteins including elastin, but rather limited hydrolysis of small-molecule substrates. Assays are conveniently made with hemoglobin, casein or Z-Phe-Arg-NHMec as substrate.. Prematurely activated/folded staphopain A is inhibited by staphostatin A (ScpB), which is probably required to protect staphylococcal cytoplasmic proteins from degradation by ScpA. Its function is as follows. Cysteine protease that plays an important role in the inhibition of host innate immune response. Cleaves host elastins found in connective tissues, pulmonary surfactant protein A in the lungs, and the chemokine receptor CXCR2 on leukocytes. Proteolytic cleavage of surfactant protein A impairs bacterial phagocytosis by neutrophils while CXCR2 degradation blocks neutrophil activation and chemotaxis. Additionally, promotes vascular leakage by activating the plasma kallikerin/kinin system, resulting in hypotension. This is Staphopain A (sspP) from Staphylococcus aureus (strain COL).